Here is a 128-residue protein sequence, read N- to C-terminus: Large ribosomal subunit protein bL17 (128 aa).

It belongs to the bacterial ribosomal protein bL17 family. In terms of assembly, part of the 50S ribosomal subunit. Contacts protein L32.

This is Large ribosomal subunit protein bL17 from Ehrlichia ruminantium (strain Gardel).